We begin with the raw amino-acid sequence, 210 residues long: Thymidylate kinase (210 aa).

Residue 11 to 18 (GVDGSGKS) participates in ATP binding.

The protein belongs to the thymidylate kinase family.

It catalyses the reaction dTMP + ATP = dTDP + ADP. In terms of biological role, phosphorylation of dTMP to form dTDP in both de novo and salvage pathways of dTTP synthesis. The protein is Thymidylate kinase of Mycoplasmoides gallisepticum (strain R(low / passage 15 / clone 2)) (Mycoplasma gallisepticum).